The sequence spans 215 residues: Negative modulator of initiation of replication (215 aa).

Positions 71–93 are disordered; sequence AETPKPSSEQEIRTPARKQSTQS. The interaction with DNA stretch occupies residues 181–187; that stretch reads NTNSGRK.

This sequence belongs to the SeqA family. In terms of assembly, homodimer. Polymerizes to form helical filaments.

It localises to the cytoplasm. In terms of biological role, negative regulator of replication initiation, which contributes to regulation of DNA replication and ensures that replication initiation occurs exactly once per chromosome per cell cycle. Binds to pairs of hemimethylated GATC sequences in the oriC region, thus preventing assembly of replication proteins and re-initiation at newly replicated origins. Repression is relieved when the region becomes fully methylated. This is Negative modulator of initiation of replication from Mannheimia succiniciproducens (strain KCTC 0769BP / MBEL55E).